A 704-amino-acid polypeptide reads, in one-letter code: Protein cueball (704 aa).

Residues 1 to 26 form the signal peptide; that stretch reads MKSPCRAAAGWLVLLLSSCCLGYVIA. Topologically, residues 27–594 are extracellular; the sequence is TEWAAAVTTD…TYCKESFNRT (568 aa). LDL-receptor class B repeat units lie at residues 69–119, 120–166, 199–242, and 243–288; these read GKLY…DHLE, RRLY…EATT, RHLY…DHYR, and NRLY…KNDY. Residues Asn-152 and Asn-219 are each glycosylated (N-linked (GlcNAc...) asparagine). 3 EGF-like domains span residues 363–397, 432–478, and 514–551; these read TQQQ…KLCE, DRNR…ARCE, and EEYS…QRCE. 8 cysteine pairs are disulfide-bonded: Cys-372/Cys-385, Cys-387/Cys-396, Cys-436/Cys-446, Cys-440/Cys-465, Cys-467/Cys-477, Cys-518/Cys-528, Cys-522/Cys-539, and Cys-541/Cys-550. Asn-375 is a glycosylation site (N-linked (GlcNAc...) asparagine). N-linked (GlcNAc...) asparagine glycosylation is present at Asn-450. An N-linked (GlcNAc...) asparagine glycan is attached at Asn-532. Asn-592 is a glycosylation site (N-linked (GlcNAc...) asparagine). A helical membrane pass occupies residues 595-615; sequence VVYTSLCFTVSFALLLAVVLV. At 616–704 the chain is on the cytoplasmic side; it reads VSRMMKPPRP…NCGDGTAERK (89 aa).

Belongs to the cueball family.

Its subcellular location is the cell membrane. Its function is as follows. Has a role in spermatogenesis and oogenesis. The polypeptide is Protein cueball (Anopheles gambiae (African malaria mosquito)).